Consider the following 419-residue polypeptide: Subtilisin-like protease 2 (419 aa).

An N-terminal signal peptide occupies residues 1–16; that stretch reads MQLLNFGLLLLPFVAG. Residues 17–122 constitute a propeptide that is removed on maturation; it reads DLAPQPEPLL…VHPDQHVYLA (106 aa). The 87-residue stretch at 36–122 folds into the Inhibitor I9 domain; it reads QYIVTLKEGL…VHPDQHVYLA (87 aa). Residues 131–419 form the Peptidase S8 domain; it reads RWGLGYMSSK…IQERKFKLPK (289 aa). Residues aspartate 169 and histidine 201 each act as charge relay system in the active site. 3 N-linked (GlcNAc...) asparagine glycosylation sites follow: asparagine 248, asparagine 261, and asparagine 348. Serine 357 serves as the catalytic Charge relay system. Asparagine 388 carries an N-linked (GlcNAc...) asparagine glycan.

Belongs to the peptidase S8 family.

The protein localises to the secreted. Functionally, secreted subtilisin-like serine protease with keratinolytic activity that contributes to pathogenicity. In Trichophyton verrucosum (Cattle ringworm fungus), this protein is Subtilisin-like protease 2 (SUB2).